We begin with the raw amino-acid sequence, 407 residues long: 4-hydroxy-3-methylbut-2-en-1-yl diphosphate synthase (ferredoxin) (407 aa).

[4Fe-4S] cluster contacts are provided by C312, C315, C346, and E353.

The protein belongs to the IspG family. [4Fe-4S] cluster serves as cofactor.

It carries out the reaction (2E)-4-hydroxy-3-methylbut-2-enyl diphosphate + 2 oxidized [2Fe-2S]-[ferredoxin] + H2O = 2-C-methyl-D-erythritol 2,4-cyclic diphosphate + 2 reduced [2Fe-2S]-[ferredoxin] + H(+). It functions in the pathway isoprenoid biosynthesis; isopentenyl diphosphate biosynthesis via DXP pathway; isopentenyl diphosphate from 1-deoxy-D-xylulose 5-phosphate: step 5/6. Converts 2C-methyl-D-erythritol 2,4-cyclodiphosphate (ME-2,4cPP) into 1-hydroxy-2-methyl-2-(E)-butenyl 4-diphosphate. This chain is 4-hydroxy-3-methylbut-2-en-1-yl diphosphate synthase (ferredoxin), found in Synechococcus elongatus (strain ATCC 33912 / PCC 7942 / FACHB-805) (Anacystis nidulans R2).